Here is a 335-residue protein sequence, read N- to C-terminus: Ubiquinone biosynthesis protein COQ4, mitochondrial (335 aa).

The N-terminal 10 residues, 1–10 (MLRLSLLRST), are a transit peptide targeting the mitochondrion. Residues histidine 210, aspartate 211, histidine 214, and glutamate 226 each coordinate Zn(2+).

It belongs to the COQ4 family. In terms of assembly, component of a multi-subunit COQ enzyme complex, composed of at least COQ3, COQ4, COQ5, COQ6, COQ7 and COQ9. Interacts with COQ3. The cofactor is Zn(2+).

It localises to the mitochondrion inner membrane. The enzyme catalyses 4-hydroxy-3-methoxy-5-(all-trans-hexaprenyl)benzoate + H(+) = 2-methoxy-6-(all-trans-hexaprenyl)phenol + CO2. Its pathway is cofactor biosynthesis; ubiquinone biosynthesis. In terms of biological role, lyase that catalyzes the C1-decarboxylation of 4-hydroxy-3-methoxy-5-(all-trans-hexaprenyl)benzoic acid into 2-methoxy-6-(all-trans-hexaprenyl)phenol during ubiquinone biosynthesis. May play a role in organizing a multi-subunit COQ enzyme complex required for coenzyme Q biosynthesis. Required for steady-state levels of COQ3, COQ4, COQ6, COQ7 and COQ9 polypeptides. The polypeptide is Ubiquinone biosynthesis protein COQ4, mitochondrial (Saccharomyces cerevisiae (strain ATCC 204508 / S288c) (Baker's yeast)).